The following is a 237-amino-acid chain: Chaplin-B (237 aa).

Positions 1-26 (MRRVTRNGVLAVAASGALAVTMPAYA) are cleaved as a signal peptide. Positions 42 to 82 (SPGLISGNTVQLPVDVPVDVCGNTVNVVGLLNPAAGNGCAD) constitute a Chaplin 1 domain. Disordered stretches follow at residues 81-127 (ADSG…LSGN) and 148-216 (GIGN…TLAG). Residues 101-115 (GSATEATSGGAAAEG) are compositionally biased toward low complexity. The 41-residue stretch at 120-160 (SPGVLSGNGVQLPVHLPVNVSGNSVNVVGIGNPAVGNESTN) folds into the Chaplin 2 domain. The segment covering 169 to 178 (VRPPAEPEPS) has biased composition (pro residues). The LPXTG sorting signal motif lies at 202 to 206 (LAHTG). Threonine 205 is subject to Pentaglycyl murein peptidoglycan amidated threonine. Positions 206–237 (GTDRTLPTLAGGAALVLGGTVLYRRFRPGSGD) are cleaved as a propeptide — removed by sortase.

The protein belongs to the chaplin family. Long chaplin subfamily.

The protein localises to the secreted. Its subcellular location is the cell wall. One of 8 partially redundant surface-active proteins required for efficient formation of aerial mycelium; the short chaplins assemble into a hydrophobic, amyloidal fibrillar surface layer that envelopes and protects aerial hyphae and spores, presumably anchored to the long chaplins. Chaplins have an overlapping function with the surface-active SapB peptide; chaplins are essential on minimal medium while on rich medium both chaplins and SapB are required for efficient aerial hyphae formation. The long chaplins (ChpA, ChpB, ChpC) are not absolutely necessary for short chaplin localization or rodlet formation, but probably play a role in initiating aerial hyphae development. Chaplins are also involved in cell attachment to a hydrophobic surface. The polypeptide is Chaplin-B (Streptomyces coelicolor (strain ATCC BAA-471 / A3(2) / M145)).